We begin with the raw amino-acid sequence, 777 residues long: Lon protease (777 aa).

Residues 11-204 (IPVLPLRDVV…FLMAIMESEI (194 aa)) enclose the Lon N-terminal domain. 356–363 (GPPGVGKT) is an ATP binding site. The Lon proteolytic domain maps to 592 to 773 (TNQIGQVIGL…EEVLKLSLEK (182 aa)). Active-site residues include Ser679 and Lys722.

It belongs to the peptidase S16 family. In terms of assembly, homohexamer. Organized in a ring with a central cavity.

It localises to the cytoplasm. The enzyme catalyses Hydrolysis of proteins in presence of ATP.. Its function is as follows. ATP-dependent serine protease that mediates the selective degradation of mutant and abnormal proteins as well as certain short-lived regulatory proteins. Required for cellular homeostasis and for survival from DNA damage and developmental changes induced by stress. Degrades polypeptides processively to yield small peptide fragments that are 5 to 10 amino acids long. Binds to DNA in a double-stranded, site-specific manner. The protein is Lon protease of Buchnera aphidicola subsp. Acyrthosiphon pisum (strain APS) (Acyrthosiphon pisum symbiotic bacterium).